The primary structure comprises 522 residues: Cytochrome bd-I ubiquinol oxidase subunit 1 (522 aa).

Position 1 is an N-formylmethionine (Met1). Topologically, residues 1–22 (MLDIVELSRLQFALTAMYHFLF) are cytoplasmic. Residue His19 participates in heme b binding. Residues 23–42 (VPLTLGMAFLLAIMETVYVL) traverse the membrane as a helical segment. Residues 43–94 (SGKQIYKDMTKFWGKLFGINFALGVATGLTMEFQFGTNWSYYSHYVGDIFGA) lie on the Periplasmic side of the membrane. A helical membrane pass occupies residues 95–114 (PLAIEGLMAFFLESTFVGLF). Topologically, residues 115 to 129 (FFGWDRLGKVQHMCV) are cytoplasmic. The chain crosses the membrane as a helical span at residues 130 to 149 (TWLVALGSNLSALWILVANG). The Periplasmic portion of the chain corresponds to 150–187 (WMQNPIASDFNFETMRMEMVSFSELVLNPVAQVKFVHT). His186 contacts heme b. The chain crosses the membrane as a helical span at residues 188-207 (VASGYVTGAMFILGISAWYM). Residues 208–219 (LKGRDFAFAKRS) are Cytoplasmic-facing. A helical transmembrane segment spans residues 220–239 (FAIAASFGMAAVLSVIVLGD). Over 240-392 (ESGYEMGDVQ…VAPLYFAFRI (153 aa)) the chain is Periplasmic. Met393 contacts heme b. Residues 393–412 (MVACGFLLLAIIALSFWSVI) traverse the membrane as a helical segment. At 413–470 (RNRIGEKKWLLRAALYGIPLPWIAVEAGWFVAEYGRQPWAIGEVLPTAVANSSLTAGD) the chain is on the cytoplasmic side. A helical membrane pass occupies residues 471 to 490 (LIFSMVLICGLYTLFLVAEL). At 491 to 522 (FLMFKFARLGPSSLKTGRYHFEQSSTTTQPAR) the chain is on the periplasmic side.

The protein belongs to the cytochrome ubiquinol oxidase subunit 1 family. In terms of assembly, heterodimer of subunits I and II. Requires heme b as cofactor. Heme d cis-diol is required as a cofactor.

Its subcellular location is the cell inner membrane. It carries out the reaction 2 a ubiquinol + O2(in) + 4 H(+)(in) = 2 a ubiquinone + 2 H2O(in) + 4 H(+)(out). Its pathway is energy metabolism; oxidative phosphorylation. Its function is as follows. A terminal oxidase that produces a proton motive force by the vectorial transfer of protons across the inner membrane. It is the component of the aerobic respiratory chain of E.coli that predominates when cells are grown at low aeration. Generates a proton motive force using protons and electrons from opposite sides of the membrane to generate H(2)O, transferring 1 proton/electron. The protein is Cytochrome bd-I ubiquinol oxidase subunit 1 (cydA) of Escherichia coli O6:H1 (strain CFT073 / ATCC 700928 / UPEC).